We begin with the raw amino-acid sequence, 224 residues long: Claudin-17 (224 aa).

Residues 1-7 (MAFYPLQ) lie on the Cytoplasmic side of the membrane. The chain crosses the membrane as a helical span at residues 8–28 (IAGLVLGFFGLVGTIGTTLLP). At 29 to 81 (QWRVSAFIGSNIIIFERIWEGLWMNCIQQAMVTLQCKFYNSILALPPVLEAAR) the chain is on the extracellular side. A helical transmembrane segment spans residues 82-102 (ALMCVAVALALVALIIGICGM). At 103 to 124 (KQLQCTGSSERVKAYLLGTSGV) the chain is on the cytoplasmic side. A helical membrane pass occupies residues 125 to 145 (LFILTGIFVLIPVSWTANIII). Topologically, residues 146–164 (RDFYDPTVHAGQKRELGGA) are extracellular. A helical transmembrane segment spans residues 165 to 185 (LFLGWATAAVLFIGGGLLCGY). Residues 186–224 (CCCNRKERWHRYPVPAYRVPQKDNQRNVTVPRKSSTSYV) lie on the Cytoplasmic side of the membrane.

It belongs to the claudin family. Does not form homotypic polymeric strands and it is not sufficient to form tight junctions by its own. Interacts with OCLN. As to expression, expressed at high levels in the kidney and at mucher lower levels in the brain. In the kidney, expression gradually decreases from the proximal tubule downstream to the distal convoluted tubule. Expressed in the thin ascending limb of Henle's loop, as well as in the thick ascending limb of Henle's loop. In the distal convoluted tubules, expressed only in a few tubules. Not detected in the collecting duct. In the brain, expressed in blood vessels (at protein level).

Its subcellular location is the cell junction. It is found in the tight junction. The protein localises to the cell membrane. It catalyses the reaction chloride(in) = chloride(out). The enzyme catalyses hydrogencarbonate(in) = hydrogencarbonate(out). The catalysed reaction is bromide(in) = bromide(out). It carries out the reaction iodide(out) = iodide(in). It catalyses the reaction fluoride(in) = fluoride(out). The enzyme catalyses nitrate(in) = nitrate(out). The catalysed reaction is thiocyanate(in) = thiocyanate(out). Functionally, channel-forming tight junction protein with selectivity for anions, including chloride and hydrogencarbonate, and for solutes smaller than 9 Angstrom in diameter. In the kidney proximal tubule, may be involved in quantitative reabsorption of filtered anions. Does not affect water permeability. The chain is Claudin-17 (Cldn17) from Mus musculus (Mouse).